Consider the following 875-residue polypeptide: Alanine--tRNA ligase (875 aa).

Zn(2+)-binding residues include His565, His569, Cys666, and His670.

This sequence belongs to the class-II aminoacyl-tRNA synthetase family. The cofactor is Zn(2+).

It localises to the cytoplasm. It carries out the reaction tRNA(Ala) + L-alanine + ATP = L-alanyl-tRNA(Ala) + AMP + diphosphate. Catalyzes the attachment of alanine to tRNA(Ala) in a two-step reaction: alanine is first activated by ATP to form Ala-AMP and then transferred to the acceptor end of tRNA(Ala). Also edits incorrectly charged Ser-tRNA(Ala) and Gly-tRNA(Ala) via its editing domain. This chain is Alanine--tRNA ligase, found in Methylibium petroleiphilum (strain ATCC BAA-1232 / LMG 22953 / PM1).